We begin with the raw amino-acid sequence, 238 residues long: Putative csd-like protein HI_1343 (238 aa).

Lys-146 is modified (N6-(pyridoxal phosphate)lysine).

It belongs to the class-V pyridoxal-phosphate-dependent aminotransferase family. Csd subfamily.

The chain is Putative csd-like protein HI_1343 from Haemophilus influenzae (strain ATCC 51907 / DSM 11121 / KW20 / Rd).